A 301-amino-acid chain; its full sequence is Type II restriction enzyme BslI subunit beta (301 aa).

The CHC2-type zinc-finger motif lies at 62-82 (CPDGHTKWNQNLTKEMTCSEC).

Heterotetramer of two alpha and two beta subunits. The alpha subunit is believed to be responsible for DNA recognition, while the beta subunit is thought to mediate cleavage. It depends on Zn(2+) as a cofactor.

The enzyme catalyses Endonucleolytic cleavage of DNA to give specific double-stranded fragments with terminal 5'-phosphates.. In terms of biological role, a P subtype restriction enzyme that recognizes the double-stranded sequence 5'-CCN(7)GG-3' and cleaves after N-7. In Bacillus sp. (strain NEB-606), this protein is Type II restriction enzyme BslI subunit beta.